We begin with the raw amino-acid sequence, 246 residues long: Bis(5'-nucleosyl)-tetraphosphatase PrpE [asymmetrical] (246 aa).

This sequence belongs to the PrpE family. Requires Ni(2+) as cofactor.

It catalyses the reaction P(1),P(4)-bis(5'-guanosyl) tetraphosphate + H2O = GMP + GTP + 2 H(+). In terms of biological role, asymmetrically hydrolyzes Ap4p to yield AMP and ATP. The polypeptide is Bis(5'-nucleosyl)-tetraphosphatase PrpE [asymmetrical] (Bacillus cereus (strain Q1)).